The chain runs to 243 residues: Probable HTH-type transcriptional regulator GfsR (243 aa).

Residues 154–179 (AAVARPDTSGSATGRTGDSSPSLALS) form a disordered region. Positions 161-178 (TSGSATGRTGDSSPSLAL) are enriched in polar residues. Positions 171–236 (DSSPSLALSP…QALLRWLGHP (66 aa)) constitute an HTH luxR-type domain. The H-T-H motif DNA-binding region spans 195–214 (VREIAVEMRLAEKTVRNYLS).

The protein operates within antibiotic biosynthesis. In terms of biological role, probable DNA-binding protein that contributes to the control of expression of the biosynthesis operon of the 16-membered macrolide antibiotics FD-891 and FD-892. Might be a member of a two-component regulatory system; the putative sensor kinase gene is unknown. The polypeptide is Probable HTH-type transcriptional regulator GfsR (Streptomyces halstedii).